The chain runs to 320 residues: Nodulation efficiency protein NfeD (320 aa).

Belongs to the ornithine cyclodeaminase/mu-crystallin family.

Its function is as follows. Seems to be involved in the nodulation efficiency of R.meliloti GR4 on alfalfa roots. The polypeptide is Nodulation efficiency protein NfeD (Rhizobium meliloti (Ensifer meliloti)).